The chain runs to 207 residues: Proteasome subunit beta 2 (207 aa).

The propeptide at 1–10 is removed in mature form; by autocatalysis; that stretch reads MLQLTEKFKG. T11 serves as the catalytic Nucleophile.

This sequence belongs to the peptidase T1B family. In terms of assembly, the 20S proteasome core is composed of 14 alpha and 14 beta subunits that assemble into four stacked heptameric rings, resulting in a barrel-shaped structure. The two inner rings, each composed of seven catalytic beta subunits, are sandwiched by two outer rings, each composed of seven alpha subunits. The catalytic chamber with the active sites is on the inside of the barrel. Has a gated structure, the ends of the cylinder being occluded by the N-termini of the alpha-subunits. Is capped at one or both ends by the proteasome regulatory ATPase, PAN.

The protein resides in the cytoplasm. The catalysed reaction is Cleavage of peptide bonds with very broad specificity.. With respect to regulation, the formation of the proteasomal ATPase PAN-20S proteasome complex, via the docking of the C-termini of PAN into the intersubunit pockets in the alpha-rings, triggers opening of the gate for substrate entry. Interconversion between the open-gate and close-gate conformations leads to a dynamic regulation of the 20S proteasome proteolysis activity. Functionally, component of the proteasome core, a large protease complex with broad specificity involved in protein degradation. The sequence is that of Proteasome subunit beta 2 from Pyrococcus abyssi (strain GE5 / Orsay).